A 48-amino-acid polypeptide reads, in one-letter code: MVITSENDEDRGGQEKESKEESVLAMLGIIGTILNLIVIIFVYIYTTL.

A disordered region spans residues 1–20 (MVITSENDEDRGGQEKESKE). Positions 10 to 20 (DRGGQEKESKE) are enriched in basic and acidic residues. A helical transmembrane segment spans residues 24-44 (LAMLGIIGTILNLIVIIFVYI).

In terms of assembly, interacts with ATPase ATP2A2/SERCA2. Interacts with ATPase ATP2A3/SERCA3; the interaction occurs at low levels in low glucose conditions and is increased by high glucose levels. As to expression, highly expressed in pancreatic islets where it is enriched in the insulin-producing beta cells.

It is found in the endoplasmic reticulum membrane. The protein localises to the extracellular vesicle membrane. Functionally, in neurons, plays a role in the regulation of intracellular Ca(2+), possibly by acting as an activator of ATP2A2/SERCA2, thus increasing the efficiency with which Ca(2+) is removed from the cytoplasm. Inhibits differentiation of embryonic stem cells into neurons and inhibits neurite outgrowth, likely as a result of its role in intracellular Ca(2+) regulation. In pancreatic beta cells, lowers Ca(2+) levels in the endoplasmic reticulum and enhances glucose-stimulated insulin secretion. This chain is Protein TUNAR, found in Homo sapiens (Human).